A 576-amino-acid chain; its full sequence is MVALTEDTQANANIGRLTVQTVEIADETTAIRCLDWDRERFDIEFGLRNGTTYNSFLIKGEKIALVDTSHRKFEKLYLEIVAGLIDPNTIDYLIVSHTEPDHSGLVKDILQLAPNITIVGAKVAIQFLENMVHQPFKSLQVKSGERLDLGNGHSLEFVSAPNLHWPDTILTYDHKTGILYTCDVFGMHYCDDQTYDENFFAIEEDFKYYYDCLMGPNARSVLAALKRIENLAIKTVATGHGPLLQVHISEWLGRYKNWSLEQAKTETLVALFYAEDYGYSEHLVHILGHGCTKTGVAVELIDLNTAEPQEVRELVTQASGLVIAMPSQYSLTAQAALNTILAAVHHKQAIGLLESGGGEDEPVFPLRNKFQELGLVEAFPPILIKEAPAQTTEQLCEEAGTDIGQWLTRDRTIKQIKSINTDLEKALGRISTGLYIITTKKGEIQGAMFASWVTQASLNPLGVAIAVSKERAIESLMQVGDHFVLNVLEEDNYQGLMKHFLKRFAPGADRFAGIKTYPATDGSPILAESLAYTECEITSRMDCGDHWIIYSTVHVGRVANVHAMTAVHHRKVGNHY.

The zinc metallo-hydrolase stretch occupies residues 48–240 (RNGTTYNSFL…LAIKTVATGH (193 aa)). H97, E99, D101, H164, D183, and H240 together coordinate Fe cation. The Flavodoxin-like domain maps to 269-431 (VALFYAEDYG…DLEKALGRIS (163 aa)). The flavodoxin-reductase-like stretch occupies residues 432–576 (TGLYIITTKK…VHHRKVGNHY (145 aa)).

The protein in the N-terminal section; belongs to the zinc metallo-hydrolase group 3 family. This sequence in the C-terminal section; belongs to the flavodoxin reductase family. Requires Fe cation as cofactor.

In terms of biological role, mediates electron transfer from NADH to oxygen, reducing it to water. This modular protein has 3 redox cofactors, in other organisms the same activity requires 2 or 3 proteins. The chain is Putative diflavin flavoprotein A 1 (dfa1) from Nostoc sp. (strain PCC 7120 / SAG 25.82 / UTEX 2576).